The primary structure comprises 157 residues: Nicotinate dehydrogenase subunit A (157 aa).

One can recognise a 2Fe-2S ferredoxin-type domain in the interval 3–79 (TTISLQVNGQ…GRNITTLEGL (77 aa)). 4 residues coordinate [2Fe-2S] cluster: Cys-41, Cys-46, Cys-49, and Cys-61.

Requires [2Fe-2S] cluster as cofactor.

It catalyses the reaction 2 Fe(III)-[cytochrome] + nicotinate + H2O = 2 Fe(II)-[cytochrome] + 6-hydroxynicotinate + 2 H(+). The protein operates within cofactor degradation; nicotinate degradation. Its function is as follows. Subunit of the two-component enzyme NicAB that mediates nicotinate hydroxylation, the first step in the aerobic nicotinate degradation pathway. Mediates conversion of nicotinate into 6-hydroxynicotinate (6HNA). The polypeptide is Nicotinate dehydrogenase subunit A (nicA) (Pseudomonas putida (strain ATCC 47054 / DSM 6125 / CFBP 8728 / NCIMB 11950 / KT2440)).